Consider the following 92-residue polypeptide: UPF0223 protein SP_1404 (92 aa).

This sequence belongs to the UPF0223 family.

The polypeptide is UPF0223 protein SP_1404 (Streptococcus pneumoniae serotype 4 (strain ATCC BAA-334 / TIGR4)).